A 323-amino-acid chain; its full sequence is MRTATLYRFRLPMEAGVILRYQRLKTRDGFLVHLQENGQQGWGEIAPLPEFSKETVEQAGEAAVAWLRLWHLGAEPDESELPSVAFGISCALAELQGNLPEEADYRKAPLCNGDPDELIVRLNNMSGQKVAKVKIGLYEAVRDGMVVNVLLEAVPDLSLRLDANRSWSRAKADSFAKYVNPDYRNRIAFLEEPCQTSQQSLAFARDTGIAIAWDESVRDEGFNVEAQAGVTAIVIKPTLTGSLARCCQLISAAHNVGLEAVISSSIETSFGLTQLARIAHWLTPATIPGLDTLELIQSQLVRRWPGSTMPVTRLDELAIAWRS.

Lys-134 functions as the Proton donor in the catalytic mechanism. Residues Asp-162, Glu-191, and Asp-214 each coordinate Mg(2+). Lys-236 functions as the Proton acceptor in the catalytic mechanism.

Belongs to the mandelate racemase/muconate lactonizing enzyme family. MenC type 1 subfamily. A divalent metal cation is required as a cofactor.

The enzyme catalyses (1R,6R)-6-hydroxy-2-succinyl-cyclohexa-2,4-diene-1-carboxylate = 2-succinylbenzoate + H2O. Its pathway is quinol/quinone metabolism; 1,4-dihydroxy-2-naphthoate biosynthesis; 1,4-dihydroxy-2-naphthoate from chorismate: step 4/7. It participates in quinol/quinone metabolism; menaquinone biosynthesis. Functionally, converts 2-succinyl-6-hydroxy-2,4-cyclohexadiene-1-carboxylate (SHCHC) to 2-succinylbenzoate (OSB). This Photorhabdus laumondii subsp. laumondii (strain DSM 15139 / CIP 105565 / TT01) (Photorhabdus luminescens subsp. laumondii) protein is o-succinylbenzoate synthase.